The chain runs to 642 residues: Threonine--tRNA ligase (642 aa).

The 61-residue stretch at 1–61 (MPVITLPDGS…ENDATLAIIT (61 aa)) folds into the TGS domain. Residues 243–534 (DHRKIGKQLD…LTEEFAGFFP (292 aa)) form a catalytic region. The Zn(2+) site is built by Cys-334, His-385, and His-511.

This sequence belongs to the class-II aminoacyl-tRNA synthetase family. In terms of assembly, homodimer. The cofactor is Zn(2+).

It is found in the cytoplasm. It carries out the reaction tRNA(Thr) + L-threonine + ATP = L-threonyl-tRNA(Thr) + AMP + diphosphate + H(+). Functionally, catalyzes the attachment of threonine to tRNA(Thr) in a two-step reaction: L-threonine is first activated by ATP to form Thr-AMP and then transferred to the acceptor end of tRNA(Thr). Also edits incorrectly charged L-seryl-tRNA(Thr). The polypeptide is Threonine--tRNA ligase (Salmonella paratyphi C (strain RKS4594)).